Reading from the N-terminus, the 89-residue chain is Small ribosomal subunit protein bS16c (89 aa).

It belongs to the bacterial ribosomal protein bS16 family.

Its subcellular location is the plastid. It localises to the chloroplast. The chain is Small ribosomal subunit protein bS16c from Morus indica (Mulberry).